A 282-amino-acid chain; its full sequence is Pantothenate synthetase (282 aa).

30 to 37 contributes to the ATP binding site; sequence MGALHAGH. H37 serves as the catalytic Proton donor. (R)-pantoate is bound at residue Q61. Q61 is a beta-alanine binding site. An ATP-binding site is contributed by 147–150; sequence GEKD. (R)-pantoate is bound at residue Q153. ATP-binding positions include V177 and 185-188; that span reads LSSR.

This sequence belongs to the pantothenate synthetase family. In terms of assembly, homodimer.

The protein resides in the cytoplasm. The enzyme catalyses (R)-pantoate + beta-alanine + ATP = (R)-pantothenate + AMP + diphosphate + H(+). Its pathway is cofactor biosynthesis; (R)-pantothenate biosynthesis; (R)-pantothenate from (R)-pantoate and beta-alanine: step 1/1. Catalyzes the condensation of pantoate with beta-alanine in an ATP-dependent reaction via a pantoyl-adenylate intermediate. This Phocaeicola vulgatus (strain ATCC 8482 / DSM 1447 / JCM 5826 / CCUG 4940 / NBRC 14291 / NCTC 11154) (Bacteroides vulgatus) protein is Pantothenate synthetase.